The sequence spans 398 residues: MKILVLNCGSSSIKYKLFDMTTKEVLAQGGIEKIGLVGSFLKLTLPNGEKKILEKDIPEHTAGIEFILNTLVSPEYGAIKSLDEINAVGHRMVHGGERFSESVLLNKEVLDAFIACNDLAPLHNPANLKGVNAVSAILPNVPQVGVFDTAFHQTMPDYAYMYAIPYELYEKYGVRRYGFHGTSHRYVSQRVCEFLGVDPKGKKIITCHIGNGGSISAIKDGKCIDTSMGLTPLEGLVMGTRSGDIDAGAVTFIMEKEGLNATGVSNLLNKKSGVLGVSGVSSDMRELEAAVAAGNPKAILAEKMYFYRIKKYIGAYAAALGGVDIILFTGGVGENQANCRSEVCEGLEFMGVKIDLEKNKVRGEEAIISADDSKVTVAVIPTDEELMIASDTLAILNK.

A Mg(2+)-binding site is contributed by Asn7. Lys14 contacts ATP. Residue Arg91 coordinates substrate. The active-site Proton donor/acceptor is the Asp148. ATP-binding positions include 208-212 (HIGNG), 283-285 (DMR), and 331-335 (GVGEN). Glu384 is a binding site for Mg(2+).

The protein belongs to the acetokinase family. Homodimer. Requires Mg(2+) as cofactor. Mn(2+) is required as a cofactor.

Its subcellular location is the cytoplasm. The enzyme catalyses acetate + ATP = acetyl phosphate + ADP. The protein operates within metabolic intermediate biosynthesis; acetyl-CoA biosynthesis; acetyl-CoA from acetate: step 1/2. In terms of biological role, catalyzes the formation of acetyl phosphate from acetate and ATP. Can also catalyze the reverse reaction. This chain is Acetate kinase, found in Phocaeicola vulgatus (strain ATCC 8482 / DSM 1447 / JCM 5826 / CCUG 4940 / NBRC 14291 / NCTC 11154) (Bacteroides vulgatus).